Reading from the N-terminus, the 111-residue chain is uncharacterized protein (111 aa).

Belongs to the SUI1 family.

This is an uncharacterized protein from Synechocystis sp. (strain ATCC 27184 / PCC 6803 / Kazusa).